Here is a 353-residue protein sequence, read N- to C-terminus: MSTIYMSQLPATLPLMEGDQDQGLYPAFHRAKDPPILFPFMIDSAVEHQGQIYGDQGLRRQQVLGESNQQFNDHMMMGGSDVFLTPSPFRPTIQSIGSDMIQRSSYDPYDIESNNKQHANGSTSKWMSTPPMKMRIIRKGAATDPEGGAVRKPRRRAQAHQDESQQQLQQALGVVRVCSDCNTTKTPLWRSGPCGPKSLCNACGIRQRKARRAMAAAANGGAAVAPAKSVAAAPVNNKPAAKKEKRAADVDRSLPFKKRCKMVDHVAAAVAATKPTAAGEVVAAAPKDQDHVIVVGGENAAATSMPAQNPISKAAATAAAAAASPAFFHGLPRDEITDAAMLLMTLSCGLVHS.

A Nuclear localization signal 1 motif is present at residues 137–144 (IRKGAATD). The segment at 142–166 (ATDPEGGAVRKPRRRAQAHQDESQQ) is disordered. The GATA-type zinc-finger motif lies at 178 to 203 (CSDCNTTKTPLWRSGPCGPKSLCNAC). Residues 244-251 (EKRAADVD) carry the Nuclear localization signal 2 motif.

Belongs to the type IV zinc-finger family. Class B subfamily. In terms of tissue distribution, mostly expressed in leaves and stems, and, at low levels, in roots.

It is found in the nucleus. Functionally, transcriptional regulator that specifically binds 5'-GATA-3' or 5'-GAT-3' motifs within gene promoters. Influences the expression of nuclear encoded chloroplast-targeted genes. Regulates chloroplast development and promotes chlorophyll accumulation. Modulates plant architecture (e.g. height, length and width of leaf blades, and flowering tillers production) and represses tillering, probably by modulating number of cells. Promotes senescence. Involved in grain filling, panicle development and starch production. This Oryza sativa subsp. japonica (Rice) protein is Protein CYTOKININ-RESPONSIVE GATA TRANSCRIPTION FACTOR 1.